The chain runs to 278 residues: HTH-type transcriptional regulator HdfR (278 aa).

Residues 1–58 (MDTELLKTFLEVSRTRHFGRAAEALYLTQSAVSFRIRQLENQLGVNLFTRHRNNIRLT) form the HTH lysR-type domain. Positions 18 to 37 (FGRAAEALYLTQSAVSFRIR) form a DNA-binding region, H-T-H motif.

The protein belongs to the LysR transcriptional regulatory family.

Negatively regulates the transcription of the flagellar master operon flhDC by binding to the upstream region of the operon. The polypeptide is HTH-type transcriptional regulator HdfR (Salmonella schwarzengrund (strain CVM19633)).